Here is a 773-residue protein sequence, read N- to C-terminus: Pentatricopeptide repeat-containing protein At1g76280 (773 aa).

11 PPR repeats span residues 130–165 (DSRS…RISP), 166–200 (LLPI…RVGK), 201–231 (NGIT…YVNH), 235–269 (DILS…ALRG), 332–369 (LRWS…NLKP), 370–400 (YDST…ISEC), 402–436 (YSYP…KLRP), 524–558 (GTPT…GCPA), 559–593 (DVAT…GFSP), 594–628 (KAVT…EIHL), and 629–663 (DVLS…KVNP).

This sequence belongs to the PPR family. P subfamily.

This Arabidopsis thaliana (Mouse-ear cress) protein is Pentatricopeptide repeat-containing protein At1g76280.